Here is a 436-residue protein sequence, read N- to C-terminus: Sulfopropanediol 3-dehydrogenase (436 aa).

NAD(+) is bound by residues Y118, Q180, and N203. Zn(2+) contacts are provided by Q248 and H251. Active-site proton acceptor residues include E318 and H319. Zn(2+) is bound by residues D352 and H411.

This sequence belongs to the histidinol dehydrogenase family. HpsN subfamily. Requires Zn(2+) as cofactor.

It carries out the reaction (2R)-3-sulfopropanediol + 2 NAD(+) + H2O = (2R)-3-sulfolactate + 2 NADH + 3 H(+). In terms of biological role, catalyzes the NAD-dependent oxidation of (R)-2,3-dihydroxypropane-1-sulfonate to (R)-3-sulfolactate. The polypeptide is Sulfopropanediol 3-dehydrogenase (Cupriavidus pinatubonensis (strain JMP 134 / LMG 1197) (Cupriavidus necator (strain JMP 134))).